We begin with the raw amino-acid sequence, 347 residues long: 4-hydroxythreonine-4-phosphate dehydrogenase (347 aa).

Substrate-binding residues include His137 and Thr138. Positions 174, 219, and 274 each coordinate a divalent metal cation. Positions 282, 291, and 300 each coordinate substrate.

It belongs to the PdxA family. In terms of assembly, homodimer. Zn(2+) is required as a cofactor. It depends on Mg(2+) as a cofactor. The cofactor is Co(2+).

Its subcellular location is the cytoplasm. The enzyme catalyses 4-(phosphooxy)-L-threonine + NAD(+) = 3-amino-2-oxopropyl phosphate + CO2 + NADH. It participates in cofactor biosynthesis; pyridoxine 5'-phosphate biosynthesis; pyridoxine 5'-phosphate from D-erythrose 4-phosphate: step 4/5. Functionally, catalyzes the NAD(P)-dependent oxidation of 4-(phosphooxy)-L-threonine (HTP) into 2-amino-3-oxo-4-(phosphooxy)butyric acid which spontaneously decarboxylates to form 3-amino-2-oxopropyl phosphate (AHAP). The chain is 4-hydroxythreonine-4-phosphate dehydrogenase from Cupriavidus pinatubonensis (strain JMP 134 / LMG 1197) (Cupriavidus necator (strain JMP 134)).